Here is a 523-residue protein sequence, read N- to C-terminus: F-box only protein 31-B (523 aa).

The F-box domain maps to 59 to 105; it reads PRSLLQLPPEILVEIFSSLPGTELPSLAQVCRKFRQILTTDTIWKRR. 4 residues coordinate Zn(2+): cysteine 201, histidine 209, cysteine 225, and histidine 231. Positions 372–427 are disordered; that stretch reads IQREQRQTGNEEDDGKGAGPDRAEHSQQPAPVHRPAKEDVNGVDNADDREQKPPNV. Composition is skewed to basic and acidic residues over residues 386-396 and 406-423; these read GKGAGPDRAEH and PAKE…REQK.

Belongs to the FBXO31 family. As to quaternary structure, part of a SCF (SKP1-cullin-F-box) protein ligase complex SCF(FBXO31).

Its subcellular location is the cytoplasm. Its pathway is protein modification; protein ubiquitination. In terms of biological role, substrate-recognition component of the SCF(FBXO31) protein ligase complex, which specifically mediates the ubiquitination of proteins amidated at their C-terminus in response to oxidative stress, leading to their degradation by the proteasome. Fbxo31 specifically recognizes and binds C-terminal peptides bearing an amide: C-terminal amidation in response to oxidative stress takes place following protein fragmentation. The SCF(FBXO31) also plays a role in G1 arrest following DNA damage by mediating ubiquitination of phosphorylated cyclin-D1 (ccnd1), promoting its degradation by the proteasome, resulting in G1 arrest. The SCF(FBXO31) complex is however not a major regulator of ccnd1 stability during the G1/S transition. This is F-box only protein 31-B (fbxo31-b) from Xenopus laevis (African clawed frog).